The sequence spans 205 residues: Holliday junction resolvase RecU (205 aa).

The segment at 1 to 26 (MIRYPNGKSYQPIQPIGTKKRISGES) is disordered. Thr86, Asp88, Glu101, and Gln120 together coordinate Mg(2+).

This sequence belongs to the RecU family. Mg(2+) is required as a cofactor.

The protein resides in the cytoplasm. The catalysed reaction is Endonucleolytic cleavage at a junction such as a reciprocal single-stranded crossover between two homologous DNA duplexes (Holliday junction).. Functionally, endonuclease that resolves Holliday junction intermediates in genetic recombination. Cleaves mobile four-strand junctions by introducing symmetrical nicks in paired strands. Promotes annealing of linear ssDNA with homologous dsDNA. Required for DNA repair, homologous recombination and chromosome segregation. This Bacillus pumilus (strain SAFR-032) protein is Holliday junction resolvase RecU.